The chain runs to 113 residues: UPF0122 protein Lreu_1156 (113 aa).

It belongs to the UPF0122 family.

Functionally, might take part in the signal recognition particle (SRP) pathway. This is inferred from the conservation of its genetic proximity to ftsY/ffh. May be a regulatory protein. In Limosilactobacillus reuteri (strain DSM 20016) (Lactobacillus reuteri), this protein is UPF0122 protein Lreu_1156.